We begin with the raw amino-acid sequence, 156 residues long: CASP-like protein 5C1 (156 aa).

Over 1–21 (MENRERAGAGAVGSAGSLGLR) the chain is Cytoplasmic. The chain crosses the membrane as a helical span at residues 22-42 (VGQAVFSSASLLFMSVGVEFF). Residues 43-46 (SYTA) are Extracellular-facing. A helical transmembrane segment spans residues 47-67 (FCFLVTIMGLVIPWSCTLAMI). The Cytoplasmic portion of the chain corresponds to 68–81 (DVYSILVGCPLRVP). A helical membrane pass occupies residues 82-102 (GVMVIVVIGDWVLAILSLAAA). At 103–132 (SSSAAVIDLLLQFHGSHCSPRFCGRYQLSA) the chain is on the extracellular side. A helical transmembrane segment spans residues 133 to 153 (MMAFLSWFLTAASSLFNLWFI). Residues 154-156 (ASR) are Cytoplasmic-facing.

This sequence belongs to the Casparian strip membrane proteins (CASP) family. In terms of assembly, homodimer and heterodimers.

The protein localises to the cell membrane. This is CASP-like protein 5C1 from Oryza sativa subsp. japonica (Rice).